Here is a 407-residue protein sequence, read N- to C-terminus: Phosphopentomutase (407 aa).

Positions 11, 305, 310, 346, 347, and 358 each coordinate Mn(2+).

It belongs to the phosphopentomutase family. The cofactor is Mn(2+).

The protein localises to the cytoplasm. It catalyses the reaction 2-deoxy-alpha-D-ribose 1-phosphate = 2-deoxy-D-ribose 5-phosphate. It carries out the reaction alpha-D-ribose 1-phosphate = D-ribose 5-phosphate. The protein operates within carbohydrate degradation; 2-deoxy-D-ribose 1-phosphate degradation; D-glyceraldehyde 3-phosphate and acetaldehyde from 2-deoxy-alpha-D-ribose 1-phosphate: step 1/2. In terms of biological role, isomerase that catalyzes the conversion of deoxy-ribose 1-phosphate (dRib-1-P) and ribose 1-phosphate (Rib-1-P) to deoxy-ribose 5-phosphate (dRib-5-P) and ribose 5-phosphate (Rib-5-P), respectively. The polypeptide is Phosphopentomutase (Legionella pneumophila (strain Corby)).